Reading from the N-terminus, the 113-residue chain is DNA-directed RNA polymerase subunit Rpo4 (113 aa).

This sequence belongs to the eukaryotic RPB4 RNA polymerase subunit family. In terms of assembly, part of the 13-subunit RNA polymerase complex. Forms a stalk with Rpo7 that extends from the main structure.

The protein localises to the cytoplasm. The catalysed reaction is RNA(n) + a ribonucleoside 5'-triphosphate = RNA(n+1) + diphosphate. DNA-dependent RNA polymerase (RNAP) catalyzes the transcription of DNA into RNA using the four ribonucleoside triphosphates as substrates. This subunit is less well bound than the others. The sequence is that of DNA-directed RNA polymerase subunit Rpo4 from Saccharolobus solfataricus (strain ATCC 35092 / DSM 1617 / JCM 11322 / P2) (Sulfolobus solfataricus).